The sequence spans 240 residues: uncharacterized protein (240 aa).

The segment at 93–160 (QEASGCTVGE…AGGGAAASGQ (68 aa)) is disordered. Composition is skewed to low complexity over residues 110 to 119 (AQPSQPAQGG) and 129 to 150 (GGAE…PAEN).

This is an uncharacterized protein from Streptomyces viridochromogenes.